The following is a 92-amino-acid chain: Progonadoliberin-1 (92 aa).

The N-terminal stretch at 1 to 23 is a signal peptide; sequence MEKSRKILVGVLLFTASVAICLA. Q24 is subject to Pyrrolidone carboxylic acid. A Glycine amide modification is found at G33.

Belongs to the GnRH family.

Its subcellular location is the secreted. Stimulates the secretion of gonadotropins. The sequence is that of Progonadoliberin-1 (GNRH1) from Gallus gallus (Chicken).